Consider the following 345-residue polypeptide: Phosphoribosylformylglycinamidine cyclo-ligase (345 aa).

Belongs to the AIR synthase family.

Its subcellular location is the cytoplasm. The enzyme catalyses 2-formamido-N(1)-(5-O-phospho-beta-D-ribosyl)acetamidine + ATP = 5-amino-1-(5-phospho-beta-D-ribosyl)imidazole + ADP + phosphate + H(+). It functions in the pathway purine metabolism; IMP biosynthesis via de novo pathway; 5-amino-1-(5-phospho-D-ribosyl)imidazole from N(2)-formyl-N(1)-(5-phospho-D-ribosyl)glycinamide: step 2/2. In Escherichia fergusonii (strain ATCC 35469 / DSM 13698 / CCUG 18766 / IAM 14443 / JCM 21226 / LMG 7866 / NBRC 102419 / NCTC 12128 / CDC 0568-73), this protein is Phosphoribosylformylglycinamidine cyclo-ligase.